A 143-amino-acid polypeptide reads, in one-letter code: Small ribosomal subunit protein bS6 (143 aa).

Residues 95–143 (GPDTEQSFIMKSKDDKGDKPERRRRDDDENGDVGVSNDSDNDGGNAEAA) form a disordered region. Residues 105-121 (KSKDDKGDKPERRRRDD) show a composition bias toward basic and acidic residues.

Belongs to the bacterial ribosomal protein bS6 family.

Functionally, binds together with bS18 to 16S ribosomal RNA. The protein is Small ribosomal subunit protein bS6 of Xylella fastidiosa (strain M23).